Reading from the N-terminus, the 388-residue chain is Isocitrate dehydrogenase [NAD] subunit 1, mitochondrial (388 aa).

The N-terminal 35 residues, 1–35 (MFSLRTAQPAQSLFRAATNTYSTSLPRSAIAARSF), are a transit peptide targeting the mitochondrion. Residues arginine 137, arginine 168, and aspartate 255 each coordinate substrate. A Mg(2+)-binding site is contributed by aspartate 255.

The protein belongs to the isocitrate and isopropylmalate dehydrogenases family. In terms of assembly, octamer of two non-identical subunits IDH1 and IDH2. Mg(2+) serves as cofactor. Mn(2+) is required as a cofactor.

It is found in the mitochondrion. It carries out the reaction D-threo-isocitrate + NAD(+) = 2-oxoglutarate + CO2 + NADH. Functionally, performs an essential role in the oxidative function of the citric acid cycle. This is Isocitrate dehydrogenase [NAD] subunit 1, mitochondrial (IDH1) from Ajellomyces capsulatus (Darling's disease fungus).